We begin with the raw amino-acid sequence, 420 residues long: LanC-like protein 3 (420 aa).

Belongs to the LanC-like protein family.

This chain is LanC-like protein 3 (Lancl3), found in Mus musculus (Mouse).